A 280-amino-acid polypeptide reads, in one-letter code: Undecaprenyl-diphosphatase (280 aa).

The next 7 membrane-spanning stretches (helical) occupy residues 1 to 21 (MTLL…PFPV), 45 to 65 (FLPF…GVFW), 90 to 110 (IFGL…LLEH), 115 to 135 (VFGT…LLMV), 151 to 171 (IATL…LALL), 226 to 246 (IMVQ…ICSL), and 260 to 280 (LTPF…VILL).

The protein belongs to the UppP family.

It is found in the cell inner membrane. The enzyme catalyses di-trans,octa-cis-undecaprenyl diphosphate + H2O = di-trans,octa-cis-undecaprenyl phosphate + phosphate + H(+). Catalyzes the dephosphorylation of undecaprenyl diphosphate (UPP). Confers resistance to bacitracin. In Gluconobacter oxydans (strain 621H) (Gluconobacter suboxydans), this protein is Undecaprenyl-diphosphatase.